The chain runs to 241 residues: Phosphoadenosine 5'-phosphosulfate reductase (241 aa).

Cys235 acts as the Nucleophile; cysteine thiosulfonate intermediate in catalysis.

This sequence belongs to the PAPS reductase family. CysH subfamily.

The protein resides in the cytoplasm. It catalyses the reaction [thioredoxin]-disulfide + sulfite + adenosine 3',5'-bisphosphate + 2 H(+) = [thioredoxin]-dithiol + 3'-phosphoadenylyl sulfate. Its pathway is sulfur metabolism; hydrogen sulfide biosynthesis; sulfite from sulfate: step 3/3. Its function is as follows. Catalyzes the formation of sulfite from phosphoadenosine 5'-phosphosulfate (PAPS) using thioredoxin as an electron donor. The polypeptide is Phosphoadenosine 5'-phosphosulfate reductase (Xanthomonas axonopodis pv. citri (strain 306)).